The sequence spans 361 residues: POU domain, class 3, transcription factor 4-A (361 aa).

3 disordered regions span residues 100 to 131, 150 to 189, and 333 to 361; these read HVNH…GQPI, LTPP…EETP, and EKRM…CNEL. Residues 119-131 show a composition bias toward polar residues; sequence AHNSSLTSSGQPI. Positions 165 to 183 are enriched in basic and acidic residues; that stretch reads VLREPNDHVDLGSHHCQDH. The 75-residue stretch at 186 to 260 folds into the POU-specific domain; it reads EETPTSDELE…LLNKWLEEAD (75 aa). Residues 278–337 constitute a DNA-binding region (homeobox); sequence KRKKRTSIEVSVKGVLETHFLKCPKPAALEITSLADSLQLEKEVVRVWFCNRRQKEKRMT.

Belongs to the POU transcription factor family. Class-3 subfamily. In terms of tissue distribution, from embryonic stage 10, expressed in the Spemann's organizer. During gastrulation, expressed in both the involuting mesoderm and the overlying neuroectoderm. During the neural plate and neural fold stages, expressed in the entire neuroectoderm with expression in discrete regions of the developing nervous system persisting at later stages. Transiently expressed in the pronephros from stages 24-32. In adults, expressed in the kidney and brain.

It is found in the nucleus. Its function is as follows. Transcriptional activator. Induces neural-specific gene expression to act as a key regulator of neural differentiation. This chain is POU domain, class 3, transcription factor 4-A (pou3f4-a), found in Xenopus laevis (African clawed frog).